Here is a 506-residue protein sequence, read N- to C-terminus: Procardosin-B (506 aa).

Residues 1–24 form the signal peptide; it reads MGTPIKASLLALFLFFLLSPTAFS. A propeptide spanning residues 25 to 70 is cleaved from the precursor; the sequence is VSNGGLLRVGLKKRKVDRLDQLRAHGVHMLGNARKDFGFRRTLSDS. The region spanning 85-503 is the Peptidase A1 domain; it reads YYGEIGIGTP…DYGKLRVGFA (419 aa). Residue aspartate 103 is part of the active site. Cysteine 116 and cysteine 122 are disulfide-bonded. N-linked (GlcNAc...) asparagine glycans are attached at residues asparagine 139 and asparagine 252. Cysteine 281 and cysteine 285 are joined by a disulfide. Residue aspartate 290 is part of the active site. The Saposin B-type domain occupies 315 to 417; the sequence is VLNQQCKTLV…NEVCDQLPTS (103 aa). Cystine bridges form between cysteine 320-cysteine 411, cysteine 345-cysteine 383, cysteine 351-cysteine 380, and cysteine 425-cysteine 462. A glycan (N-linked (GlcNAc...) asparagine) is linked at asparagine 397.

It belongs to the peptidase A1 family. As to quaternary structure, heterodimer of a light chain and a heavy chain. An intermediate form is produced first, and undergoes proteolytic processing to remove the internal plant-specific insert (PSI) and the propeptide. As to expression, detected in pistils, but not in seeds, bracts, midribs, roots, leaves or stamen extracts. Detected in seeds. In stigmas and styles, detected in the transmitting tissue and in contiguous subepidermal layers at the longitudenal grooves of the stigma (at protein level).

It localises to the microsome membrane. Its subcellular location is the protein storage vacuole. The protein resides in the secreted. It is found in the cell wall. The protein localises to the extracellular space. It localises to the extracellular matrix. Inhibited by the specific aspartic proteinase inhibitors diazoacetyl-noleucine methyl ester and pepstatin. Its function is as follows. Aspartic protease. Cleaves alpha-lactalbumin but not beta-lactoglobulin. The sequence is that of Procardosin-B from Cynara cardunculus (Cardoon).